We begin with the raw amino-acid sequence, 424 residues long: CinA-like protein (424 aa).

Belongs to the CinA family.

This Shewanella piezotolerans (strain WP3 / JCM 13877) protein is CinA-like protein.